Reading from the N-terminus, the 886-residue chain is uncharacterized protein (886 aa).

A signal peptide spans 1-20 (MKIIKSLILLVLFMASPAKG). A run of 5 helical transmembrane segments spans residues 520–540 (VTIFGLMFVLGALKLTAVEVV), 609–629 (LLFIQLLQIHNGLAFIVIITI), 647–667 (VIAFIGLTVMISLAPFFIILM), 680–700 (ISILFSYVVQPTILLIFFLLI), and 779–799 (LLFYSYCLMSYGLVSFVTIVV). The disordered stretch occupies residues 856–886 (EARKPQGGGEHTGKFFQNRNDVKPEQTERND). Over residues 875–886 (NDVKPEQTERND) the composition is skewed to basic and acidic residues.

This sequence belongs to the TrbL/VirB6 family.

The protein localises to the cell membrane. This is an uncharacterized protein from Rickettsia bellii (strain RML369-C).